The following is a 78-amino-acid chain: Translational regulator CsrA (78 aa).

The protein belongs to the CsrA/RsmA family. In terms of assembly, homodimer; the beta-strands of each monomer intercalate to form a hydrophobic core, while the alpha-helices form wings that extend away from the core.

It localises to the cytoplasm. Functionally, a translational regulator that binds mRNA to regulate translation initiation and/or mRNA stability. Usually binds in the 5'-UTR at or near the Shine-Dalgarno sequence preventing ribosome-binding, thus repressing translation. Its main target seems to be the major flagellin gene, while its function is anatagonized by FliW. This chain is Translational regulator CsrA, found in Desulfovibrio desulfuricans (strain ATCC 27774 / DSM 6949 / MB).